We begin with the raw amino-acid sequence, 193 residues long: Pyridoxal 5'-phosphate synthase subunit PdxT (193 aa).

50-52 (GES) lines the L-glutamine pocket. Catalysis depends on cysteine 82, which acts as the Nucleophile. Residues arginine 109 and 136-137 (IR) each bind L-glutamine. Residues histidine 172 and glutamate 174 each act as charge relay system in the active site.

Belongs to the glutaminase PdxT/SNO family. As to quaternary structure, in the presence of PdxS, forms a dodecamer of heterodimers. Only shows activity in the heterodimer.

It catalyses the reaction aldehydo-D-ribose 5-phosphate + D-glyceraldehyde 3-phosphate + L-glutamine = pyridoxal 5'-phosphate + L-glutamate + phosphate + 3 H2O + H(+). The catalysed reaction is L-glutamine + H2O = L-glutamate + NH4(+). The protein operates within cofactor biosynthesis; pyridoxal 5'-phosphate biosynthesis. Functionally, catalyzes the hydrolysis of glutamine to glutamate and ammonia as part of the biosynthesis of pyridoxal 5'-phosphate. The resulting ammonia molecule is channeled to the active site of PdxS. The sequence is that of Pyridoxal 5'-phosphate synthase subunit PdxT from Streptococcus pneumoniae (strain JJA).